A 216-amino-acid polypeptide reads, in one-letter code: GTP cyclohydrolase 1 (216 aa).

Zn(2+)-binding residues include Cys-108, His-111, and Cys-179.

It belongs to the GTP cyclohydrolase I family. As to quaternary structure, homomer.

It catalyses the reaction GTP + H2O = 7,8-dihydroneopterin 3'-triphosphate + formate + H(+). The protein operates within cofactor biosynthesis; 7,8-dihydroneopterin triphosphate biosynthesis; 7,8-dihydroneopterin triphosphate from GTP: step 1/1. This is GTP cyclohydrolase 1 from Shewanella baltica (strain OS223).